The sequence spans 156 residues: Arginine repressor (156 aa).

Belongs to the ArgR family.

The protein resides in the cytoplasm. It functions in the pathway amino-acid biosynthesis; L-arginine biosynthesis [regulation]. Its function is as follows. Regulates arginine biosynthesis genes. This Shigella boydii serotype 18 (strain CDC 3083-94 / BS512) protein is Arginine repressor.